A 188-amino-acid chain; its full sequence is UPF0157 protein DR_2534 (188 aa).

The segment covering 1 to 12 (MGRGGRGVGGGR) has biased composition (gly residues). The tract at residues 1 to 37 (MGRGGRGVGGGRPEGHGASVEGGRTRQTEGMDLISPD) is disordered.

This sequence belongs to the UPF0157 (GrpB) family.

This Deinococcus radiodurans (strain ATCC 13939 / DSM 20539 / JCM 16871 / CCUG 27074 / LMG 4051 / NBRC 15346 / NCIMB 9279 / VKM B-1422 / R1) protein is UPF0157 protein DR_2534.